The sequence spans 740 residues: 1,4-alpha-glucan branching enzyme GlgB (740 aa).

D419 acts as the Nucleophile in catalysis. Residue E472 is the Proton donor of the active site.

It belongs to the glycosyl hydrolase 13 family. GlgB subfamily. In terms of assembly, monomer.

The enzyme catalyses Transfers a segment of a (1-&gt;4)-alpha-D-glucan chain to a primary hydroxy group in a similar glucan chain.. Its pathway is glycan biosynthesis; glycogen biosynthesis. Functionally, catalyzes the formation of the alpha-1,6-glucosidic linkages in glycogen by scission of a 1,4-alpha-linked oligosaccharide from growing alpha-1,4-glucan chains and the subsequent attachment of the oligosaccharide to the alpha-1,6 position. In Paramagnetospirillum magneticum (strain ATCC 700264 / AMB-1) (Magnetospirillum magneticum), this protein is 1,4-alpha-glucan branching enzyme GlgB.